We begin with the raw amino-acid sequence, 444 residues long: L-cysteine:1D-myo-inositol 2-amino-2-deoxy-alpha-D-glucopyranoside ligase (444 aa).

Residues 1–13 (MPCDRKTSPDQHH) show a composition bias toward basic and acidic residues. Residues 1–21 (MPCDRKTSPDQHHALQIHRHH) form a disordered region. A Zn(2+)-binding site is contributed by C75. Residues 75-78 (CGIT), T90, and 113-115 (NIT) contribute to the L-cysteinyl-5'-AMP site. The 'HIGH' region signature appears at 77–87 (ITPYDATHLGH). Positions 219-224 (ERGGDP) match the 'ERGGDP' region motif. Residue W259 coordinates L-cysteinyl-5'-AMP. C263 lines the Zn(2+) pocket. Residue 281 to 283 (GSD) participates in L-cysteinyl-5'-AMP binding. H288 is a Zn(2+) binding site. I315 lines the L-cysteinyl-5'-AMP pocket. Residues 321–325 (KMSKS) carry the 'KMSKS' region motif.

It belongs to the class-I aminoacyl-tRNA synthetase family. MshC subfamily. Monomer. Zn(2+) serves as cofactor.

The enzyme catalyses 1D-myo-inositol 2-amino-2-deoxy-alpha-D-glucopyranoside + L-cysteine + ATP = 1D-myo-inositol 2-(L-cysteinylamino)-2-deoxy-alpha-D-glucopyranoside + AMP + diphosphate + H(+). Functionally, catalyzes the ATP-dependent condensation of GlcN-Ins and L-cysteine to form L-Cys-GlcN-Ins. This is L-cysteine:1D-myo-inositol 2-amino-2-deoxy-alpha-D-glucopyranoside ligase from Mycolicibacterium gilvum (strain PYR-GCK) (Mycobacterium gilvum (strain PYR-GCK)).